Consider the following 271-residue polypeptide: MSRIQNTFAALAAQGRKGLIPFITAGDPDPAKTVELMHALAEGGADVIELGVPFSDPMADGPVIQRSSERALAKGVTLHSVLDDVKRFRARDQKTPVVLMGYANPIERMGADAFAAAARDAGVDGVLVVDYPPEESHDFAAKMRAAGIDPIFLLAPTSTDDRIAAVGQVASGYVYYVSLKGVTGAANLDVSSIAGKIPAIKSRVPLPVGVGFGIRDAATARAVAEVADAVVIGSRLVQLLEQAVPERAAAELAGFVAELRAAIDGAAKPAA.

Catalysis depends on proton acceptor residues glutamate 49 and aspartate 60.

It belongs to the TrpA family. As to quaternary structure, tetramer of two alpha and two beta chains.

It catalyses the reaction (1S,2R)-1-C-(indol-3-yl)glycerol 3-phosphate + L-serine = D-glyceraldehyde 3-phosphate + L-tryptophan + H2O. It participates in amino-acid biosynthesis; L-tryptophan biosynthesis; L-tryptophan from chorismate: step 5/5. The alpha subunit is responsible for the aldol cleavage of indoleglycerol phosphate to indole and glyceraldehyde 3-phosphate. This Burkholderia mallei (strain NCTC 10247) protein is Tryptophan synthase alpha chain.